The primary structure comprises 131 residues: Phosphomevalonate dehydratase small subunit (131 aa).

Ser-62 serves as the catalytic Proton acceptor.

Belongs to the AcnX type II small subunit family. In terms of assembly, heterodimer composed of a large subunit (PMDh-L) and a small subunit (PMDh-S).

It carries out the reaction (R)-5-phosphomevalonate = (2E)-3-methyl-5-phosphooxypent-2-enoate + H2O. The protein operates within isoprenoid biosynthesis; isopentenyl diphosphate biosynthesis via mevalonate pathway. Functionally, component of a hydro-lyase that catalyzes the dehydration of mevalonate 5-phosphate (MVA5P) to form trans-anhydromevalonate 5-phosphate (tAHMP). Involved in the archaeal mevalonate (MVA) pathway, which provides fundamental precursors for isoprenoid biosynthesis, such as isopentenyl diphosphate (IPP) and dimethylallyl diphosphate (DMAPP). In Methanothermobacter thermautotrophicus (strain ATCC 29096 / DSM 1053 / JCM 10044 / NBRC 100330 / Delta H) (Methanobacterium thermoautotrophicum), this protein is Phosphomevalonate dehydratase small subunit.